The chain runs to 477 residues: PTS system glucose-specific EIICB component (477 aa).

The PTS EIIC type-1 domain occupies 1–388 (MFKNVFANLQ…FNLDTPGREN (388 aa)). Helical transmembrane passes span 15-35 (SLML…IGSA), 51-71 (TGGS…ALGF), 76-96 (GVAA…LTAV), 112-132 (HLSD…AYMF), 152-172 (FVPI…SLIW), 191-211 (PILA…FGLH), 250-270 (LSGG…AIWH), 280-300 (IGSI…TEPI), 304-324 (FIIV…LSFP), and 357-377 (FPII…LFII). A PTS EIIB type-1 domain is found at 399 to 477 (NEIAPYIITA…TAMDECIKNI (79 aa)). The active-site Phosphocysteine intermediate; for EIIB activity is the Cys-421. At Cys-421 the chain carries Phosphocysteine.

It localises to the cell inner membrane. The catalysed reaction is N(pros)-phospho-L-histidyl-[protein] + D-glucose(out) = D-glucose 6-phosphate(in) + L-histidyl-[protein]. Its function is as follows. The phosphoenolpyruvate-dependent sugar phosphotransferase system (sugar PTS), a major carbohydrate active transport system, catalyzes the phosphorylation of incoming sugar substrates concomitantly with their translocation across the cell membrane. The enzyme II complex composed of PtsG and Crr is involved in glucose transport. In Buchnera aphidicola subsp. Acyrthosiphon pisum (strain APS) (Acyrthosiphon pisum symbiotic bacterium), this protein is PTS system glucose-specific EIICB component (ptsG).